The following is a 176-amino-acid chain: Conjugal transfer protein TraF (176 aa).

The N-terminal stretch at 1–24 (MSKRAVIRFLGVAGLVLSGATVMG) is a signal peptide.

This sequence belongs to the peptidase S26C family.

The protein resides in the periplasm. Its function is as follows. Involved in conjugal transfer of the plasmid. In Agrobacterium fabrum (strain C58 / ATCC 33970) (Agrobacterium tumefaciens (strain C58)), this protein is Conjugal transfer protein TraF (traF).